The sequence spans 725 residues: Polyribonucleotide nucleotidyltransferase (725 aa).

Mg(2+) contacts are provided by D488 and D494. A KH domain is found at 555-614 (PRMITMKIHPDKIREVIGKGGSTIQALTKETGTTIDIQEDGTITIASTSTDGMAEAKRRI). Positions 624 to 692 (GKIYAGTVLK…EKGRLRLSLK (69 aa)) constitute an S1 motif domain. Positions 702–725 (ISPIAQGDAPAAAPAAPASPDQQQ) are disordered. Low complexity predominate over residues 706 to 725 (AQGDAPAAAPAAPASPDQQQ).

It belongs to the polyribonucleotide nucleotidyltransferase family. The cofactor is Mg(2+).

It localises to the cytoplasm. The catalysed reaction is RNA(n+1) + phosphate = RNA(n) + a ribonucleoside 5'-diphosphate. Its function is as follows. Involved in mRNA degradation. Catalyzes the phosphorolysis of single-stranded polyribonucleotides processively in the 3'- to 5'-direction. The sequence is that of Polyribonucleotide nucleotidyltransferase from Cupriavidus metallidurans (strain ATCC 43123 / DSM 2839 / NBRC 102507 / CH34) (Ralstonia metallidurans).